The primary structure comprises 189 residues: RPW8-like protein 1 (189 aa).

An RPW8 domain is found at 1-153 (MPLVELLTSA…ITRQPMDIIE (153 aa)). Residues 7–24 (LTSAALGLSLQLLHDAII) traverse the membrane as a helical segment. Coiled coils occupy residues 65–92 (FRKV…LKLR) and 126–147 (DIKK…ITRQ). Asn-177 is a glycosylation site (N-linked (GlcNAc...) asparagine).

This sequence belongs to the plant RPW8 protein family.

The protein resides in the membrane. Its function is as follows. Probable disease resistance (R) protein. In Arabidopsis thaliana (Mouse-ear cress), this protein is RPW8-like protein 1.